A 508-amino-acid chain; its full sequence is Ribose import ATP-binding protein RbsA 2 (508 aa).

ABC transporter domains lie at 6-241 and 254-499; these read LTIH…VGRE and ERSG…SGMG. 38-45 is an ATP binding site; sequence GENGAGKS.

Belongs to the ABC transporter superfamily. Ribose importer (TC 3.A.1.2.1) family. The complex is composed of an ATP-binding protein (RbsA), two transmembrane proteins (RbsC) and a solute-binding protein (RbsB).

It localises to the cell inner membrane. The catalysed reaction is D-ribose(out) + ATP + H2O = D-ribose(in) + ADP + phosphate + H(+). Its function is as follows. Part of the ABC transporter complex RbsABC involved in ribose import. Responsible for energy coupling to the transport system. This chain is Ribose import ATP-binding protein RbsA 2, found in Rhizobium etli (strain ATCC 51251 / DSM 11541 / JCM 21823 / NBRC 15573 / CFN 42).